The sequence spans 1005 residues: Vacuolar membrane protease (1005 aa).

Residues Met1–Gln14 are Cytoplasmic-facing. The helical transmembrane segment at Thr15–Val35 threads the bilayer. The Vacuolar segment spans residues Ser36–Lys353. Asn107 is a glycosylation site (N-linked (GlcNAc...) asparagine). 2 residues coordinate Zn(2+): His152 and Asp164. The active-site Proton acceptor is the Glu196. Glu197 provides a ligand contact to Zn(2+). An N-linked (GlcNAc...) asparagine glycan is attached at Asn213. Zn(2+) contacts are provided by Glu222 and His311. A helical membrane pass occupies residues Pro354 to Leu374. Residues Lys375 to Phe448 are Cytoplasmic-facing. The segment at Gly379–Ala420 is disordered. The span at Ser406–Asp419 shows a compositional bias: polar residues. A helical transmembrane segment spans residues Trp449 to Ile469. Residues Asn470–Tyr479 are Vacuolar-facing. Residues Phe480–Ala500 traverse the membrane as a helical segment. The Cytoplasmic portion of the chain corresponds to Phe501–Thr519. Residues Ile520 to Gly540 form a helical membrane-spanning segment. Residues Lys541–Gln543 are Vacuolar-facing. A helical transmembrane segment spans residues Val544–Gly564. At Thr565–Asp644 the chain is on the cytoplasmic side. Residues Asp577–Lys640 form a disordered region. A compositionally biased stretch (low complexity) spans Ser588 to Asp606. Residues Gly645–Val665 form a helical membrane-spanning segment. The Vacuolar portion of the chain corresponds to Gly666–Ala686. Residue Asn677 is glycosylated (N-linked (GlcNAc...) asparagine). Residues Trp687–Phe707 traverse the membrane as a helical segment. Over Ser708–Arg713 the chain is Cytoplasmic. The chain crosses the membrane as a helical span at residues Gly714–Phe734. At Pro735 to Val1005 the chain is on the vacuolar side. Asn761 and Asn961 each carry an N-linked (GlcNAc...) asparagine glycan.

This sequence belongs to the peptidase M28 family. Zn(2+) is required as a cofactor.

It localises to the vacuole membrane. May be involved in vacuolar sorting and osmoregulation. The polypeptide is Vacuolar membrane protease (Coprinopsis cinerea (strain Okayama-7 / 130 / ATCC MYA-4618 / FGSC 9003) (Inky cap fungus)).